Here is a 597-residue protein sequence, read N- to C-terminus: Elongation factor 4 (597 aa).

In terms of domain architecture, tr-type G spans 4–181; the sequence is SKIRNFSIIA…AIVDYVPAPK (178 aa). Residues 16 to 21 and 128 to 131 contribute to the GTP site; these read DHGKST and NKID.

This sequence belongs to the TRAFAC class translation factor GTPase superfamily. Classic translation factor GTPase family. LepA subfamily.

It is found in the cell membrane. The enzyme catalyses GTP + H2O = GDP + phosphate + H(+). Its function is as follows. Required for accurate and efficient protein synthesis under certain stress conditions. May act as a fidelity factor of the translation reaction, by catalyzing a one-codon backward translocation of tRNAs on improperly translocated ribosomes. Back-translocation proceeds from a post-translocation (POST) complex to a pre-translocation (PRE) complex, thus giving elongation factor G a second chance to translocate the tRNAs correctly. Binds to ribosomes in a GTP-dependent manner. In Mycoplasmopsis agalactiae (strain NCTC 10123 / CIP 59.7 / PG2) (Mycoplasma agalactiae), this protein is Elongation factor 4.